The primary structure comprises 278 residues: Secoisolariciresinol dehydrogenase (278 aa).

NAD(+)-binding positions include 23-28, D47, V73, and N99; that span reads GGAGGI. The substrate site is built by S104 and S164. The Proton donor/acceptor role is filled by Y167. K171 and V200 together coordinate NAD(+).

It belongs to the short-chain dehydrogenases/reductases (SDR) family. In terms of assembly, homotetramer. In terms of tissue distribution, mostly expressed in stems and rhizomes, and, to a lower extent, in leaves.

It carries out the reaction (-)-secoisolariciresinol + 2 NAD(+) = (-)-matairesinol + 2 NADH + 2 H(+). It participates in aromatic compound metabolism; phenylpropanoid biosynthesis. Functionally, oxidoreductase involved in lignan biosynthesis. Also involved in the biosynthesis of etoposide, a chemotherapeutic compound of the topoisomerase inhibitor family. Catalyzes the stereospecific conversion of (-)-secoisolariciresinol to (-)-matairesinol via a lactol intermediate. The protein is Secoisolariciresinol dehydrogenase of Sinopodophyllum hexandrum (Himalayan may apple).